Here is a 329-residue protein sequence, read N- to C-terminus: Apolipoprotein E (329 aa).

The first 18 residues, 1-18, serve as a signal peptide directing secretion; it reads MKVLWAALVVALLAGCWA. 8 consecutive repeat copies span residues 92-113, 114-135, 136-157, 158-179, 180-201, 202-223, 224-245, and 246-267. Residues 92 to 267 are 8 X 22 AA approximate tandem repeats; sequence TLMEETMKEI…HLDEVREQME (176 aa). The residue at position 155 (Met155) is a Methionine sulfoxide. Residue Ser159 is modified to Phosphoserine. An LDL and other lipoprotein receptors binding region spans residues 170–180; it reads HMRKLRKRVLR. Residue 174 to 177 coordinates heparin; that stretch reads LRKR. Positions 222–302 are lipid-binding and lipoprotein association; sequence HAKVDALATQ…GWFEPLVEDM (81 aa). 241 to 248 is a binding site for heparin; that stretch reads GQQLRGRL. The segment at 278 to 329 is homooligomerization; that stretch reads NQMRQQAEAFQARLKGWFEPLVEDMQRQWAVLVEKVQAAVGTSPTTPPVETK. The segment at 290 to 302 is specificity for association with VLDL; that stretch reads RLKGWFEPLVEDM.

This sequence belongs to the apolipoprotein A1/A4/E family. In terms of assembly, homotetramer. May interact with ABCA1; functionally associated with ABCA1 in the biogenesis of HDLs. May interact with APP/A4 amyloid-beta peptide; the interaction is extremely stable in vitro but its physiological significance is unclear. May interact with MAPT. May interact with MAP2. In the cerebrospinal fluid, interacts with secreted SORL1. Interacts with PMEL; this allows the loading of PMEL luminal fragment on ILVs to induce fibril nucleation. APOE exists as multiple glycosylated and sialylated glycoforms within cells and in plasma. The extent of glycosylation and sialylation are tissue and context specific. In terms of processing, glycated in plasma VLDL. Post-translationally, phosphorylated by FAM20C in the extracellular medium.

Its subcellular location is the secreted. The protein resides in the extracellular space. It localises to the extracellular matrix. The protein localises to the extracellular vesicle. It is found in the endosome. Its subcellular location is the multivesicular body. Its function is as follows. APOE is an apolipoprotein, a protein associating with lipid particles, that mainly functions in lipoprotein-mediated lipid transport between organs via the plasma and interstitial fluids. APOE is a core component of plasma lipoproteins and is involved in their production, conversion and clearance. Apolipoproteins are amphipathic molecules that interact both with lipids of the lipoprotein particle core and the aqueous environment of the plasma. As such, APOE associates with chylomicrons, chylomicron remnants, very low density lipoproteins (VLDL) and intermediate density lipoproteins (IDL) but shows a preferential binding to high-density lipoproteins (HDL). It also binds a wide range of cellular receptors including the LDL receptor/LDLR, the LDL receptor-related proteins LRP1, LRP2 and LRP8 and the very low-density lipoprotein receptor/VLDLR that mediate the cellular uptake of the APOE-containing lipoprotein particles. Finally, APOE also has a heparin-binding activity and binds heparan-sulfate proteoglycans on the surface of cells, a property that supports the capture and the receptor-mediated uptake of APOE-containing lipoproteins by cells. A main function of APOE is to mediate lipoprotein clearance through the uptake of chylomicrons, VLDLs, and HDLs by hepatocytes. APOE is also involved in the biosynthesis by the liver of VLDLs as well as their uptake by peripheral tissues ensuring the delivery of triglycerides and energy storage in muscle, heart and adipose tissues. By participating in the lipoprotein-mediated distribution of lipids among tissues, APOE plays a critical role in plasma and tissues lipid homeostasis. APOE is also involved in two steps of reverse cholesterol transport, the HDLs-mediated transport of cholesterol from peripheral tissues to the liver, and thereby plays an important role in cholesterol homeostasis. First, it is functionally associated with ABCA1 in the biogenesis of HDLs in tissues. Second, it is enriched in circulating HDLs and mediates their uptake by hepatocytes. APOE also plays an important role in lipid transport in the central nervous system, regulating neuron survival and sprouting. This Eumetopias jubatus (Steller sea lion) protein is Apolipoprotein E (APOE).